The sequence spans 121 residues: Large ribosomal subunit protein uL18 (121 aa).

The protein belongs to the universal ribosomal protein uL18 family. In terms of assembly, part of the 50S ribosomal subunit; part of the 5S rRNA/L5/L18/L25 subcomplex. Contacts the 5S and 23S rRNAs.

This is one of the proteins that bind and probably mediate the attachment of the 5S RNA into the large ribosomal subunit, where it forms part of the central protuberance. In Leptothrix cholodnii (strain ATCC 51168 / LMG 8142 / SP-6) (Leptothrix discophora (strain SP-6)), this protein is Large ribosomal subunit protein uL18.